A 709-amino-acid chain; its full sequence is Dibasic-processing endoprotease (709 aa).

A signal peptide spans 1 to 22 (MHPALLCGPILAIFLQFLVSSC). Propeptides lie at residues 23–82 (SPLE…IRKR) and 83–102 (GIDAGILELERQTPRWRYKR). Residues 103 to 668 (DASESDELLN…QPVLEPSYRE (566 aa)) are Lumenal-facing. The Peptidase S8 domain maps to 128–440 (QWHIFNSNNP…FGKLDASKFV (313 aa)). N-linked (GlcNAc...) asparagine glycosylation is present at asparagine 155. Catalysis depends on charge relay system residues aspartate 162 and histidine 200. Intrachain disulfides connect cysteine 216-cysteine 363 and cysteine 308-cysteine 338. The active-site Charge relay system is serine 371. The region spanning 449 to 588 (VNPQTWLIAP…QLALWGESEN (140 aa)) is the P/Homo B domain. 3 N-linked (GlcNAc...) asparagine glycosylation sites follow: asparagine 463, asparagine 471, and asparagine 620. The chain crosses the membrane as a helical span at residues 669–693 (IVAFITFFLLFAFIFVAVIWTWISA). At 694-709 (FWKAKAPPPLSQQEIA) the chain is on the cytoplasmic side.

It belongs to the peptidase S8 family. Furin subfamily. Ca(2+) serves as cofactor. Post-translationally, N-glycosylated.

It localises to the golgi apparatus. The protein resides in the trans-Golgi network membrane. In terms of biological role, membrane-bound, subtilisin-like serine protease that processes the P-factor precursor and other precursor proteins. Essential for cell viability. Cleaves substrate on the C-terminal side of dibasic residues. This Schizosaccharomyces pombe (strain 972 / ATCC 24843) (Fission yeast) protein is Dibasic-processing endoprotease (krp1).